Reading from the N-terminus, the 100-residue chain is Urease subunit gamma (100 aa).

It belongs to the urease gamma subunit family. As to quaternary structure, heterotrimer of UreA (gamma), UreB (beta) and UreC (alpha) subunits. Three heterotrimers associate to form the active enzyme.

The protein localises to the cytoplasm. The catalysed reaction is urea + 2 H2O + H(+) = hydrogencarbonate + 2 NH4(+). It functions in the pathway nitrogen metabolism; urea degradation; CO(2) and NH(3) from urea (urease route): step 1/1. The protein is Urease subunit gamma of Pseudomonas entomophila (strain L48).